Here is a 962-residue protein sequence, read N- to C-terminus: Synphilin-1 (962 aa).

3 disordered regions span residues 80–99, 104–137, and 222–249; these read SPLK…DQKN, YQKG…EPSQ, and TALR…PAYE. 4 ANK repeats span residues 348–379, 383–412, 418–447, and 455–484; these read NGNN…CLNE, EQLT…AIAE, DFPS…EQGI, and EGNS…NVTM. A coiled-coil region spans residues 522-548; the sequence is VKLTKQLKEQTVERVTLQSQLQQLLEA. The segment at 548–590 is disordered; that stretch reads AQKSEGKSLPSSPSSPSSPASTKSQWKALDTDEESTGKSKVGA. The segment covering 554–571 has biased composition (low complexity); that stretch reads KSLPSSPSSPSSPASTKS. The ANK 5 repeat unit spans residues 602–631; it reads VSSRARTKGKDEDSDKILRQLLGKEISENV. The segment covering 667–684 has biased composition (low complexity); sequence RQLMQRSLSESDTDSNNS. The disordered stretch occupies residues 667–852; sequence RQLMQRSLSE…QRTSESGEQM (186 aa). Over residues 685–699 the composition is skewed to basic and acidic residues; that stretch reads EDPKNTPVKRADRPR. The stretch at 698–728 is one ANK 6 repeat; that stretch reads PRPQPIVESVENVDSAESLHLMIKKHSLASG. Polar residues predominate over residues 772 to 790; it reads PSTEATQSSPDSTAAQKVA. Basic and acidic residues predominate over residues 831-840; sequence NGEKDKDKGR.

Associates with SNCA, RNF19A and PRKN. In terms of processing, ubiquitinated; mediated by SIAH1 or RNF19A and leading to its subsequent proteasomal degradation.

This is Synphilin-1 (Sncaip) from Mus musculus (Mouse).